The sequence spans 456 residues: MATTQSVTRIKKGLDLPITGCPEQHMEAGPAIRQVALLGDDYIGMKPTMLVSAGDRVVLGQPVFEDKKTPGVIYTAPASGTVVDVVRGAKRKFEAVVIDVDNDSTETTTIDGIAGSDPISIAREKLVDGLVQIGLWSAFRTRPFGKVPTIESRPHSIFVTAIDTNPLAADPAVVLADRKDQFVIGLQALTRLTDGAVHLCQAEKASIPGGDVAGVQSASFAGPHPAGLPGTHIHHLDPVSLNKTVWYIGYQDVIAIGSFLQTGQLDTRRVISLAGPKVNQPRLIETRLGACIDELIDGEVDTSVKLRVISGSVLNGHIATAPHQFLGRYDNQVSVIEEGDHREFLGWQKPGFDKFSVSRIFASAMTPDRKFDFTSSTGGSERAMVPLGTYEKVMPMDILATQLLRALIVRDTDSAQQLGVLELEEEDLALCTFVCPGKYEYGSLIRENLTTIEREG.

This sequence belongs to the NqrA family. In terms of assembly, composed of six subunits; NqrA, NqrB, NqrC, NqrD, NqrE and NqrF.

The catalysed reaction is a ubiquinone + n Na(+)(in) + NADH + H(+) = a ubiquinol + n Na(+)(out) + NAD(+). NQR complex catalyzes the reduction of ubiquinone-1 to ubiquinol by two successive reactions, coupled with the transport of Na(+) ions from the cytoplasm to the periplasm. NqrA to NqrE are probably involved in the second step, the conversion of ubisemiquinone to ubiquinol. In Rhodopirellula baltica (strain DSM 10527 / NCIMB 13988 / SH1), this protein is Na(+)-translocating NADH-quinone reductase subunit A.